A 347-amino-acid polypeptide reads, in one-letter code: 3-methyl-2-oxobutanoate hydroxymethyltransferase 1, mitochondrial (347 aa).

The transit peptide at 1 to 48 (MASSLTRNCSRFSKAISVRFMSNLPENTVYGGPKPQNPNQRVTLTHLR) directs the protein to the mitochondrion. Residues Asp83 and Asp122 each coordinate Mg(2+). Residues 83–84 (DS), Asp122, and Lys152 each bind 3-methyl-2-oxobutanoate. Glu154 is a Mg(2+) binding site. Catalysis depends on Glu222, which acts as the Proton acceptor.

Belongs to the PanB family. Mg(2+) is required as a cofactor.

Its subcellular location is the mitochondrion. It catalyses the reaction 3-methyl-2-oxobutanoate + (6R)-5,10-methylene-5,6,7,8-tetrahydrofolate + H2O = 2-dehydropantoate + (6S)-5,6,7,8-tetrahydrofolate. Its pathway is cofactor biosynthesis; (R)-pantothenate biosynthesis; (R)-pantoate from 3-methyl-2-oxobutanoate: step 1/2. Its function is as follows. Catalyzes the reversible reaction in which hydroxymethyl group from 5,10-methylenetetrahydrofolate is transferred onto alpha-ketoisovalerate to form ketopantoate. The polypeptide is 3-methyl-2-oxobutanoate hydroxymethyltransferase 1, mitochondrial (KPHMT1) (Arabidopsis thaliana (Mouse-ear cress)).